A 330-amino-acid polypeptide reads, in one-letter code: Phenylalanine--tRNA ligase alpha subunit (330 aa).

Glu-255 provides a ligand contact to Mg(2+).

This sequence belongs to the class-II aminoacyl-tRNA synthetase family. Phe-tRNA synthetase alpha subunit type 1 subfamily. In terms of assembly, tetramer of two alpha and two beta subunits. Mg(2+) is required as a cofactor.

It is found in the cytoplasm. It carries out the reaction tRNA(Phe) + L-phenylalanine + ATP = L-phenylalanyl-tRNA(Phe) + AMP + diphosphate + H(+). This is Phenylalanine--tRNA ligase alpha subunit from Acinetobacter baumannii (strain SDF).